The primary structure comprises 269 residues: Serine/arginine-rich splicing factor 5 (269 aa).

The region spanning Cys4–Ala74 is the RRM 1 domain. A disordered region spans residues Arg73–Arg105. Basic residues predominate over residues Ala74–Gly83. Ser86 carries the post-translational modification Phosphoserine. The 82-residue stretch at Asn108–Ser189 folds into the RRM 2 domain. N6-acetyllysine is present on Lys167. The segment at Ile174–Asn269 is disordered. The segment covering Lys181 to Ser226 has biased composition (basic residues). Ser224, Ser226, Ser230, Ser247, and Ser250 each carry phosphoserine. Residues Arg239–Val251 are compositionally biased toward low complexity.

This sequence belongs to the splicing factor SR family. In terms of assembly, found in a pre-mRNA splicing complex with SRSF4/SFRS4, SRSF5/SFRS5, SNRNP70, SNRPA1, SRRM1 and SRRM2. Interacts with RBMY; the interaction inhibits SRSF5 pre-mRNA splicing. Interacts (via RS domain) with PHF5A (via N-terminus). Post-translationally, extensively phosphorylated on serine residues in the RS domain.

It localises to the nucleus. May be required for progression through G1 and entry into S phase of cell growth. May play a regulatory role in pre-mRNA splicing. Autoregulates its own expression. Plays a role in constitutive splicing and can modulate the selection of alternative splice sites. This chain is Serine/arginine-rich splicing factor 5 (Srsf5), found in Mus musculus (Mouse).